The sequence spans 461 residues: Proton extrusion protein PxcA (461 aa).

Transmembrane regions (helical) follow at residues 244-264, 339-359, 386-406, and 421-441; these read FMLL…ALIV, LKNI…VFTG, IILF…EVLV, and FINM…KYWI.

This sequence belongs to the CemA family.

Its subcellular location is the cell inner membrane. Its function is as follows. Required for H(+) efflux immediately after light irradiation to form a rapid H(+) concentration gradient across the thylakoid membranes. Together with PxcL, contributes to transient H(+) uptake following dark to light transition. This chain is Proton extrusion protein PxcA, found in Thermosynechococcus vestitus (strain NIES-2133 / IAM M-273 / BP-1).